The chain runs to 650 residues: Fructose-1,6-bisphosphatase class 3 (650 aa).

The protein belongs to the FBPase class 3 family. Mn(2+) serves as cofactor.

It catalyses the reaction beta-D-fructose 1,6-bisphosphate + H2O = beta-D-fructose 6-phosphate + phosphate. It participates in carbohydrate biosynthesis; gluconeogenesis. The protein is Fructose-1,6-bisphosphatase class 3 of Staphylococcus xylosus.